The primary structure comprises 256 residues: MSNIDLIGMSNRDLIGMSNSELLTVEPLDLQFPFELKKQISCSLYLTNKTDNNVAFKVKTTNPKKYCVRPNTGVVLPRSTCEVLVTMQAQKEAPSDMQCKDKFLLQGVIASPGVTAKEVTPEMFSKEAGHRVEETKLRVTYVAPPRPPSPVHEGSEEGSSPRASVSDNGHGSEFSFERFIVDNKAGHQENTSEARALITKLTEEKQSAIQLNNRLQRELDQLRRESKKSQSGGIPFMYVLLVGLIGLILGYIMKRT.

Methionine 1 is subject to N-acetylmethionine. Over 1-232 (MSNIDLIGMS…RRESKKSQSG (232 aa)) the chain is Cytoplasmic. At serine 2 the chain carries N-acetylserine; in Vesicle-associated protein 1-1, N-terminally processed. The 121-residue stretch at 22 to 142 (LLTVEPLDLQ…EETKLRVTYV (121 aa)) folds into the MSP domain. The interval 142-169 (VAPPRPPSPVHEGSEEGSSPRASVSDNG) is disordered. Phosphoserine is present on serine 149. Polar residues predominate over residues 157 to 169 (EGSSPRASVSDNG). Residues 187-232 (HQENTSEARALITKLTEEKQSAIQLNNRLQRELDQLRRESKKSQSG) adopt a coiled-coil conformation. The helical; Anchor for type IV membrane protein transmembrane segment at 233 to 253 (GIPFMYVLLVGLIGLILGYIM) threads the bilayer.

This sequence belongs to the VAMP-associated protein (VAP) (TC 9.B.17) family. As to quaternary structure, homodimer or homooligomer. Interacts with the cowpea mosaic virus (CPMV) NTP-binding protein (NTB). Interacts with NET3C.

It localises to the endoplasmic reticulum membrane. The protein localises to the protein storage vacuole membrane. Its function is as follows. Part of a membrane-cytoskeletal adapter complex that forms a bridge between the endoplasmic reticulum and the plasma membrane. Associates with microtubules. This Arabidopsis thaliana (Mouse-ear cress) protein is Vesicle-associated protein 1-1 (PVA11).